A 457-amino-acid chain; its full sequence is Heme sensor protein HssS (457 aa).

2 helical membrane-spanning segments follow: residues 9–29 (IAIY…VLTN) and 164–184 (TFLA…VIAS). An HAMP domain is found at 186–238 (YSIIRPVKKLKLATERLIDGDFETPIKQTRKDEIGTLQYHFNKMRESLGQVDQ). One can recognise a Histidine kinase domain in the interval 246 to 456 (NVSHEIKTPL…TFTITLPNNS (211 aa)). Residue His249 is modified to Phosphohistidine; by autocatalysis.

Autophosphorylated.

It is found in the cell membrane. It carries out the reaction ATP + protein L-histidine = ADP + protein N-phospho-L-histidine.. Its function is as follows. Member of the two-component regulatory system HssS/HssR involved in intracellular heme homeostasis and tempering of staphylococcal virulence. HssS functions as a heme sensor histidine kinase which is autophosphorylated at a histidine residue and transfers its phosphate group to an aspartate residue of HssR. HssR/HssS activates the expression of hrtAB, an efflux pump, in response to extracellular heme, hemin, hemoglobin or blood. The sequence is that of Heme sensor protein HssS (hssS) from Staphylococcus aureus (strain USA300).